A 164-amino-acid chain; its full sequence is FMN reductase (NADH) RutF (164 aa).

This sequence belongs to the non-flavoprotein flavin reductase family. RutF subfamily.

It carries out the reaction FMNH2 + NAD(+) = FMN + NADH + 2 H(+). In terms of biological role, catalyzes the reduction of FMN to FMNH2 which is used to reduce pyrimidine by RutA via the Rut pathway. The sequence is that of FMN reductase (NADH) RutF from Klebsiella variicola (strain At-22).